Reading from the N-terminus, the 102-residue chain is uncharacterized protein (102 aa).

Positions 10, 16, and 55 each coordinate [3Fe-4S] cluster. The disordered stretch occupies residues 66-102 (DAGDDERASADPARSPAEAERHAAKDQRIPGGHDGTV). The span at 82 to 93 (AEAERHAAKDQR) shows a compositional bias: basic and acidic residues.

The cofactor is [3Fe-4S] cluster.

In terms of biological role, electron transport protein for the cytochrome systems. This is an uncharacterized protein from Sinorhizobium fredii (strain NBRC 101917 / NGR234).